Reading from the N-terminus, the 947-residue chain is Bifunctional glutamine synthetase adenylyltransferase/adenylyl-removing enzyme (947 aa).

The segment at 1-440 is adenylyl removase; it reads MTPLSSPLSQ…VFNELIGDDE (440 aa). Residues 450–947 form an adenylyl transferase region; sequence SEPWREVWQD…ASWRKWLVAV (498 aa).

Belongs to the GlnE family. Mg(2+) is required as a cofactor.

The catalysed reaction is [glutamine synthetase]-O(4)-(5'-adenylyl)-L-tyrosine + phosphate = [glutamine synthetase]-L-tyrosine + ADP. The enzyme catalyses [glutamine synthetase]-L-tyrosine + ATP = [glutamine synthetase]-O(4)-(5'-adenylyl)-L-tyrosine + diphosphate. Its function is as follows. Involved in the regulation of glutamine synthetase GlnA, a key enzyme in the process to assimilate ammonia. When cellular nitrogen levels are high, the C-terminal adenylyl transferase (AT) inactivates GlnA by covalent transfer of an adenylyl group from ATP to specific tyrosine residue of GlnA, thus reducing its activity. Conversely, when nitrogen levels are low, the N-terminal adenylyl removase (AR) activates GlnA by removing the adenylyl group by phosphorolysis, increasing its activity. The regulatory region of GlnE binds the signal transduction protein PII (GlnB) which indicates the nitrogen status of the cell. The sequence is that of Bifunctional glutamine synthetase adenylyltransferase/adenylyl-removing enzyme from Salmonella gallinarum (strain 287/91 / NCTC 13346).